A 370-amino-acid chain; its full sequence is Chloromuconate cycloisomerase (370 aa).

Catalysis depends on K165, which acts as the Proton acceptor. Residues D194, E220, and D245 each contribute to the Mn(2+) site. E323 serves as the catalytic Proton donor.

Belongs to the mandelate racemase/muconate lactonizing enzyme family. Mn(2+) is required as a cofactor.

It catalyses the reaction 2-[(2R)-2-chloro-2,5-dihydro-5-oxofuryl]acetate = 3-chloro-cis,cis-muconate + H(+). Its pathway is aromatic compound metabolism; 3-chlorocatechol degradation. Its function is as follows. Highly active toward chlorinated substrates but retains diminished activity toward the non-chlorinated substrates. In Pseudomonas putida (Arthrobacter siderocapsulatus), this protein is Chloromuconate cycloisomerase (clcB).